A 507-amino-acid chain; its full sequence is Tyrosine protein-kinase src-2 (507 aa).

Positions 1 to 10 (MGSCIGKEDP) are enriched in basic and acidic residues. The segment at 1–52 (MGSCIGKEDPPPGATSPVHTSSTLGRESLPSHPRIPSIGPIAASSSGNTIDK) is disordered. A lipid anchor (N-myristoyl glycine) is attached at G2. The span at 35–47 (IPSIGPIAASSSG) shows a compositional bias: low complexity. Residues 57 to 118 (SQSANFVALF…PSNYVAREKS (62 aa)) form the SH3 domain. The region spanning 124 to 216 (WYFGKMRRID…GLCVNLGAPC (93 aa)) is the SH2 domain. The region spanning 240-494 (VRLIRQIGAG…LQWKLEDLFN (255 aa)) is the Protein kinase domain. ATP is bound by residues 246 to 254 (IGAGQFGEV) and K268. The active-site Proton acceptor is D358. Y500 is modified (phosphotyrosine).

Belongs to the protein kinase superfamily. Tyr protein kinase family. SRC subfamily. Mg(2+) serves as cofactor. It depends on Mn(2+) as a cofactor. In terms of processing, may be phosphorylated on Tyr-500 by csk-1. Expressed in vulva, cells around anus and pharyngeal muscles.

It carries out the reaction L-tyrosyl-[protein] + ATP = O-phospho-L-tyrosyl-[protein] + ADP + H(+). With respect to regulation, may be inhibited by csk-1-mediated phosphorylation at Tyr-500. Functionally, non-receptor tyrosine-protein kinase which may play a role in larval and pharynx development. Unlike src-1, does not play a role in embryonic development. The polypeptide is Tyrosine protein-kinase src-2 (Caenorhabditis elegans).